A 57-amino-acid chain; its full sequence is DNA gyrase inhibitor YacG (57 aa).

Zn(2+) contacts are provided by cysteine 10, cysteine 13, cysteine 25, and cysteine 29.

It belongs to the DNA gyrase inhibitor YacG family. In terms of assembly, interacts with GyrB. It depends on Zn(2+) as a cofactor.

Its function is as follows. Inhibits all the catalytic activities of DNA gyrase by preventing its interaction with DNA. Acts by binding directly to the C-terminal domain of GyrB, which probably disrupts DNA binding by the gyrase. This Brucella abortus (strain 2308) protein is DNA gyrase inhibitor YacG.